Here is a 248-residue protein sequence, read N- to C-terminus: 1-(5-phosphoribosyl)-5-[(5-phosphoribosylamino)methylideneamino] imidazole-4-carboxamide isomerase (248 aa).

Residue aspartate 8 is the Proton acceptor of the active site. The active-site Proton donor is the aspartate 131.

The protein belongs to the HisA/HisF family.

Its subcellular location is the cytoplasm. It catalyses the reaction 1-(5-phospho-beta-D-ribosyl)-5-[(5-phospho-beta-D-ribosylamino)methylideneamino]imidazole-4-carboxamide = 5-[(5-phospho-1-deoxy-D-ribulos-1-ylimino)methylamino]-1-(5-phospho-beta-D-ribosyl)imidazole-4-carboxamide. The protein operates within amino-acid biosynthesis; L-histidine biosynthesis; L-histidine from 5-phospho-alpha-D-ribose 1-diphosphate: step 4/9. This Nitrosomonas eutropha (strain DSM 101675 / C91 / Nm57) protein is 1-(5-phosphoribosyl)-5-[(5-phosphoribosylamino)methylideneamino] imidazole-4-carboxamide isomerase.